Reading from the N-terminus, the 256-residue chain is 5'-nucleotidase SurE (256 aa).

4 residues coordinate a divalent metal cation: Asp8, Asp9, Ser42, and Asn94.

The protein belongs to the SurE nucleotidase family. A divalent metal cation is required as a cofactor.

It is found in the cytoplasm. It catalyses the reaction a ribonucleoside 5'-phosphate + H2O = a ribonucleoside + phosphate. Its function is as follows. Nucleotidase that shows phosphatase activity on nucleoside 5'-monophosphates. The sequence is that of 5'-nucleotidase SurE from Ehrlichia chaffeensis (strain ATCC CRL-10679 / Arkansas).